The primary structure comprises 226 residues: MNENLFAPFMIPVMLGIPITTLIIILPSMLFPAPNRLINNRTIAIQQWLTKLTSKQLMNVHSPKGQTWSLMLISLFLFIASTNLLGMLPHSFTPTTQLSMNVGMAIPLWAGTVTTGFRNKTKMSLAHLLPQGTPTFLIPMLVIIETISLFIQPVAWAVRLTANITAGHLLMHLIGETTLALMNINLFSAFITFTILALLTILEFAVALIQAYVFTLLVSLYLHDNT.

The next 5 helical transmembrane spans lie at 5 to 25 (LFAPFMIPVMLGIPITTLIII), 68 to 88 (WSLMLISLFLFIASTNLLGML), 97 to 117 (QLSMNVGMAIPLWAGTVTTGF), 136 to 156 (FLIPMLVIIETISLFIQPVAW), and 189 to 209 (AFITFTILALLTILEFAVALI).

It belongs to the ATPase A chain family. As to quaternary structure, component of the ATP synthase complex composed at least of ATP5F1A/subunit alpha, ATP5F1B/subunit beta, ATP5MC1/subunit c (homooctomer), MT-ATP6/subunit a, MT-ATP8/subunit 8, ATP5ME/subunit e, ATP5MF/subunit f, ATP5MG/subunit g, ATP5MK/subunit k, ATP5MJ/subunit j, ATP5F1C/subunit gamma, ATP5F1D/subunit delta, ATP5F1E/subunit epsilon, ATP5PF/subunit F6, ATP5PB/subunit b, ATP5PD/subunit d, ATP5PO/subunit OSCP. ATP synthase complex consists of a soluble F(1) head domain (subunits alpha(3) and beta(3)) - the catalytic core - and a membrane F(0) domain - the membrane proton channel (subunits c, a, 8, e, f, g, k and j). These two domains are linked by a central stalk (subunits gamma, delta, and epsilon) rotating inside the F1 region and a stationary peripheral stalk (subunits F6, b, d, and OSCP). Interacts with DNAJC30; interaction is direct.

It localises to the mitochondrion inner membrane. The enzyme catalyses H(+)(in) = H(+)(out). Subunit a, of the mitochondrial membrane ATP synthase complex (F(1)F(0) ATP synthase or Complex V) that produces ATP from ADP in the presence of a proton gradient across the membrane which is generated by electron transport complexes of the respiratory chain. ATP synthase complex consist of a soluble F(1) head domain - the catalytic core - and a membrane F(1) domain - the membrane proton channel. These two domains are linked by a central stalk rotating inside the F(1) region and a stationary peripheral stalk. During catalysis, ATP synthesis in the catalytic domain of F(1) is coupled via a rotary mechanism of the central stalk subunits to proton translocation. With the subunit c (ATP5MC1), forms the proton-conducting channel in the F(0) domain, that contains two crucial half-channels (inlet and outlet) that facilitate proton movement from the mitochondrial intermembrane space (IMS) into the matrix. Protons are taken up via the inlet half-channel and released through the outlet half-channel, following a Grotthuss mechanism. This is ATP synthase F(0) complex subunit a from Balaenoptera physalus (Fin whale).